A 566-amino-acid chain; its full sequence is Tissue-type plasminogen activator (566 aa).

The first 21 residues, 1–21 (MMSAMKTEFLCVLLLCGAVFT), serve as a signal peptide directing secretion. Residues 22 to 33 (SPSQETYRRLRR) constitute a propeptide that is removed on maturation. The propeptide at 34–36 (GAR) is removed by plasmin. The Fibronectin type-I domain occupies 40–82 (VTCRDGKTQMTYRQHDSWLRPLLRGNQVEHCWCDGGRAQCHSV). 17 disulfides stabilise this stretch: C42–C72, C70–C79, C87–C98, C92–C109, C111–C120, C128–C209, C149–C191, C180–C204, C219–C300, C240–C282, C271–C295, C303–C434, C346–C362, C354–C423, C448–C523, C480–C496, and C513–C541. Residues 43 to 53 (RDGKTQMTYRQ) are important for binding to annexin A2. The 39-residue stretch at 83-121 (PVRSCSEPWCFNGGTCRQALYSSDFVCQCPEGFMGKLCE) folds into the EGF-like domain. Kringle domains lie at 128–209 (CYKD…TPAC) and 219–300 (CYTG…VPQC). Residue N153 is glycosylated (N-linked (GlcNAc...) asparagine). A Peptidase S1 domain is found at 315–565 (IKGGLFADIT…YLDWIRDNTR (251 aa)). Residues H361 and D410 each act as charge relay system in the active site. N-linked (GlcNAc...) asparagine glycosylation is present at N487. S517 serves as the catalytic Charge relay system.

It belongs to the peptidase S1 family. In terms of assembly, heterodimer of chain A and chain B held by a disulfide bond. Binds to fibrin with high affinity. This interaction leads to an increase in the catalytic efficiency of the enzyme due to an increase in affinity for plasminogen. Similarly, binding to heparin increases the activation of plasminogen. Binds to annexin A2, cytokeratin-8, fibronectin and laminin. Binds to mannose receptor and the low-density lipoprotein receptor-related protein (LRP1); these proteins are involved in TPA clearance. Binds LRP1B; binding is followed by internalization and degradation. Forms heterodimer with SERPINA5. Interacts with SERPINE1. In complex with SERPINE1, interacts with SORL1. In terms of processing, the single chain, almost fully active enzyme, can be further processed into a two-chain fully active form by a cleavage after Arg-314 catalyzed by plasmin, tissue kallikrein or factor Xa.

It localises to the secreted. It is found in the extracellular space. The catalysed reaction is Specific cleavage of Arg-|-Val bond in plasminogen to form plasmin.. Its activity is regulated as follows. Inhibited by SERPINA5. Inhibited by SERPINE1. Functionally, converts the abundant, but inactive, zymogen plasminogen to plasmin by hydrolyzing a single Arg-Val bond in plasminogen. By controlling plasmin-mediated proteolysis, it plays an important role in tissue remodeling and degradation, in cell migration and many other physiopathological events. During oocyte activation, plays a role in cortical granule reaction in the zona reaction, which contributes to the block to polyspermy. The protein is Tissue-type plasminogen activator (PLAT) of Bos taurus (Bovine).